Consider the following 640-residue polypeptide: Threonine--tRNA ligase (640 aa).

Residues 1 to 60 enclose the TGS domain; it reads MKITFPDGAVKEFEPGVSTADIAASISPGLKKKALAGKLNGELLDLVTPIHEDGAIEIVT. The interval 241–538 is catalytic; that stretch reads DHRKLGKELD…LIEEYKGAFP (298 aa). 3 residues coordinate Zn(2+): Cys334, His385, and His515.

This sequence belongs to the class-II aminoacyl-tRNA synthetase family. Homodimer. The cofactor is Zn(2+).

The protein localises to the cytoplasm. It catalyses the reaction tRNA(Thr) + L-threonine + ATP = L-threonyl-tRNA(Thr) + AMP + diphosphate + H(+). Functionally, catalyzes the attachment of threonine to tRNA(Thr) in a two-step reaction: L-threonine is first activated by ATP to form Thr-AMP and then transferred to the acceptor end of tRNA(Thr). Also edits incorrectly charged L-seryl-tRNA(Thr). This is Threonine--tRNA ligase from Listeria monocytogenes serotype 4b (strain CLIP80459).